The chain runs to 213 residues: Endoplasmic reticulum vesicle protein 25 (213 aa).

Positions 1–20 are cleaved as a signal peptide; that stretch reads MILRIPSLLYLFTLLTAVYA. The Lumenal segment spans residues 21–181; that stretch reads VKFDLTSDRN…TNESTNQRVK (161 aa). The GOLD domain maps to 33–122; the sequence is PSIIWNFASA…VRSVELDVDI (90 aa). Residues 182–202 traverse the membrane as a helical segment; the sequence is VFSVLIICCTIGLGVWQLLHL. Topologically, residues 203–213 are cytoplasmic; it reads RSFFKRKYLID.

It belongs to the EMP24/GP25L family.

Its subcellular location is the endoplasmic reticulum membrane. The protein localises to the golgi apparatus membrane. Functionally, constituent of COPII-coated endoplasmic reticulum-derived transport vesicles. Required for efficient transport of a subset of secretory proteins to the Golgi. Facilitates retrograde transport from the Golgi to the endoplasmic reticulum. The protein is Endoplasmic reticulum vesicle protein 25 (ERV25) of Cryptococcus neoformans var. neoformans serotype D (strain B-3501A) (Filobasidiella neoformans).